The following is a 397-amino-acid chain: Acetate kinase 2 (397 aa).

A Mg(2+)-binding site is contributed by Asn-10. Residue Lys-17 coordinates ATP. Arg-90 provides a ligand contact to substrate. Asp-147 functions as the Proton donor/acceptor in the catalytic mechanism. Residues 207–211, 281–283, and 329–333 each bind ATP; these read HLGNG, DAR, and GIGEN. Glu-385 provides a ligand contact to Mg(2+).

Belongs to the acetokinase family. In terms of assembly, homodimer. Requires Mg(2+) as cofactor. The cofactor is Mn(2+).

The protein resides in the cytoplasm. It catalyses the reaction acetate + ATP = acetyl phosphate + ADP. The protein operates within metabolic intermediate biosynthesis; acetyl-CoA biosynthesis; acetyl-CoA from acetate: step 1/2. In terms of biological role, catalyzes the formation of acetyl phosphate from acetate and ATP. Can also catalyze the reverse reaction. In Vibrio parahaemolyticus serotype O3:K6 (strain RIMD 2210633), this protein is Acetate kinase 2.